The chain runs to 500 residues: NAD(P)H-quinone oxidoreductase chain 4, chloroplastic (500 aa).

14 consecutive transmembrane segments (helical) span residues 4 to 24 (FPWL…MLFL), 35 to 55 (YTIC…CYNF), 87 to 107 (IGTI…AFPV), 113 to 130 (LFHF…GSFS), 134 to 154 (LLLF…LLSM), 167 to 187 (FILY…GISL), 211 to 231 (ILFY…IPLH), 242 to 262 (HYST…YGLV), 272 to 292 (AHSM…IYAA), 305 to 325 (IAYS…SITD), 330 to 350 (GAIL…FLAG), 386 to 406 (LALP…GIIT), 416 to 436 (ILII…LLSM), and 462 to 482 (LFLS…PDFV).

It belongs to the complex I subunit 4 family.

It is found in the plastid. The protein localises to the chloroplast thylakoid membrane. It catalyses the reaction a plastoquinone + NADH + (n+1) H(+)(in) = a plastoquinol + NAD(+) + n H(+)(out). The enzyme catalyses a plastoquinone + NADPH + (n+1) H(+)(in) = a plastoquinol + NADP(+) + n H(+)(out). The sequence is that of NAD(P)H-quinone oxidoreductase chain 4, chloroplastic from Nasturtium officinale (Watercress).